A 917-amino-acid polypeptide reads, in one-letter code: Serine/arginine repetitive matrix protein 1 (917 aa).

An N-acetylmethionine modification is found at methionine 1. Positions 1-151 are necessary for DNA and RNA-binding; the sequence is MDAGFFRGTS…ASMKKQDEDK (151 aa). The tract at residues 1-156 is necessary for mRNA 3'-end cleavage and cytoplasmic accumulation; that stretch reads MDAGFFRGTS…QDEDKDKRDK (156 aa). Arginine 7 bears the Citrulline mark. The 100-residue stretch at 27 to 126 folds into the PWI domain; sequence QLKFAECLEK…AGIPSAFLEL (100 aa). Lysine 127 participates in a covalent cross-link: Glycyl lysine isopeptide (Lys-Gly) (interchain with G-Cter in SUMO2). Basic and acidic residues predominate over residues 139–170; that stretch reads EKLASMKKQDEDKDKRDKEEKESSREKRERSR. The disordered stretch occupies residues 139-917; it reads EKLASMKKQD…MRKAQVSPQS (779 aa). Position 140 is an N6-acetyllysine (lysine 140). The segment covering 171 to 207 has biased composition (basic residues); sequence SPRRRKSRSPSPRRRSSPVRRERKRSHSRSPRHRTKS. Residues 214–234 show a composition bias toward basic and acidic residues; sequence PEKKEKTPELPEPSVKVKEPS. Phosphothreonine is present on threonine 220. A Phosphoserine modification is found at serine 227. Lysine 231 is covalently cross-linked (Glycyl lysine isopeptide (Lys-Gly) (interchain with G-Cter in SUMO1); alternate). Lysine 231 participates in a covalent cross-link: Glycyl lysine isopeptide (Lys-Gly) (interchain with G-Cter in SUMO2); alternate. Serine 234 and serine 240 each carry phosphoserine. Threonine 241 carries the phosphothreonine modification. Residues 246 to 275 are compositionally biased toward basic and acidic residues; it reads KVPKPEPIPEPKEPSPEKNSKKEKEKEKTR. Lysine 249 participates in a covalent cross-link: Glycyl lysine isopeptide (Lys-Gly) (interchain with G-Cter in SUMO2). Serine 260 carries the post-translational modification Phosphoserine. Basic residues-rich tracts occupy residues 276–329 and 336–351; these read PRSR…RTPP and PRHRRSRSPVRRRRRS. The tract at residues 300–702 is necessary for speckles and matrix localization; it reads RRHRSRSRSY…NKRHSPSPRP (403 aa). The segment covering 352–368 has biased composition (low complexity); it reads SASLSGSSSSSSSSRSR. Serine 389, serine 391, serine 393, and serine 402 each carry phosphoserine. Threonine 406 bears the Phosphothreonine mark. Position 414 is a phosphoserine (serine 414). A Phosphothreonine modification is found at threonine 416. A phosphoserine mark is found at serine 420, serine 429, serine 431, and serine 436. Residues 428–438 show a composition bias toward polar residues; that stretch reads VSVSPGRTSGK. Residue lysine 447 forms a Glycyl lysine isopeptide (Lys-Gly) (interchain with G-Cter in SUMO2) linkage. Phosphoserine is present on residues serine 450 and serine 452. Residue lysine 459 forms a Glycyl lysine isopeptide (Lys-Gly) (interchain with G-Cter in SUMO2) linkage. Phosphoserine occurs at positions 463 and 465. A Glycyl lysine isopeptide (Lys-Gly) (interchain with G-Cter in SUMO2) cross-link involves residue lysine 472. Residue serine 478 is modified to Phosphoserine. Residues 478-501 show a composition bias toward low complexity; the sequence is SVQQRRQYRRQNQQSSSDSGSSSS. Residues 503-518 are compositionally biased toward basic and acidic residues; the sequence is EDERPKRSHVKNGEVG. Phosphoserine is present on residues serine 524, serine 526, serine 528, serine 530, serine 532, serine 563, and serine 565. Basic residues predominate over residues 557–574; it reads SGRRRRSPSPPPTRRRRS. Residue threonine 569 is modified to Phosphothreonine. A phosphoserine mark is found at serine 574 and serine 576. The segment covering 581–606 has biased composition (basic residues); that stretch reads PRRRRTPTPPPRRRTPSPPPRRRSPS. 3 positions are modified to phosphothreonine: threonine 586, threonine 588, and threonine 595. Serine 597 bears the Phosphoserine mark. Residues 607-619 are compositionally biased toward low complexity; sequence PRRYSPPIQRRYS. A Phosphotyrosine modification is found at tyrosine 610. A phosphoserine mark is found at serine 611, serine 619, and serine 621. At threonine 628 the chain carries Phosphothreonine. 5 positions are modified to phosphoserine: serine 630, serine 640, serine 642, serine 650, and serine 652. Residues 635–650 are compositionally biased toward basic residues; it reads PKRRASPSPPPKRRVS. Residues 663–677 show a composition bias toward basic residues; sequence TKRRSPSLSSKHRKG. Positions 699-713 are enriched in pro residues; it reads SPRPRAPQTSSPPPV. Phosphoserine is present on residues serine 708, serine 709, serine 718, serine 720, serine 726, and serine 728. Low complexity-rich tracts occupy residues 714–732, 749–772, and 782–799; these read RRGASSSPQRRQSPSPSTR, AASPSPQSVRRVSSSRSVSGSPEP, and SPVQSQSPSTNWSPAVPV. Threonine 731 carries the post-translational modification Phosphothreonine. Phosphoserine occurs at positions 751, 753, 761, 765, 767, 769, 782, 786, 788, and 790. Threonine 791 is subject to Phosphothreonine. Phosphoserine occurs at positions 794 and 804. Threonine 806 is modified (phosphothreonine). Residues serine 808, serine 810, and serine 815 each carry the phosphoserine modification. A compositionally biased stretch (basic residues) spans 822–847; that stretch reads KKKKKKKDKKHKKDKKHKKHKKHKKE. The segment covering 850–879 has biased composition (low complexity); sequence VAAAAAAAVTPAAIAAATTTLAQEEPVAAP. A Glycyl lysine isopeptide (Lys-Gly) (interchain with G-Cter in SUMO2) cross-link involves residue lysine 882. Phosphothreonine is present on threonine 885. Serine 887 is modified (phosphoserine). The segment covering 895-905 has biased composition (basic and acidic residues); that stretch reads DLEKHLREKAL. Residue serine 914 is modified to Phosphoserine.

This sequence belongs to the splicing factor SR family. Identified in the spliceosome C complex. Found in a pre-mRNA splicing complex with SFRS4, SFRS5, SNRP70, SNRPA1, SRRM1 and SRRM2. Component of the minor spliceosome, which splices U12-type introns. Found in a pre-mRNA exonic splicing enhancer (ESE) complex with SNRP70, SNRPA1, SRRM1 and TRA2B/SFRS10. Found in a mRNA splicing-dependent exon junction complex (EJC) with DEK, PRPF8, NCBP1, RBM8A, RNPS1, SRRM1 and ALYREF/THOC4. Interacts with DDX39B, CPSF1, RBM8A, RNPS1, and ALYREF/THOC4. Seems to be a compound of RNA export complexes that are released from speckles in a ATP-dependent manner. Phosphorylated on multiple serine and threonine residues by DYRK3 during the G2-to-M transition, after the nuclear-envelope breakdown. Phosphorylation by DYRK3 promotes disassembly of nuclear speckles. In terms of processing, citrullinated by PADI4.

Functionally, part of pre- and post-splicing multiprotein mRNP complexes. As a component of the minor spliceosome, involved in the splicing of U12-type introns in pre-mRNAs. Involved in numerous pre-mRNA processing events. Promotes constitutive and exonic splicing enhancer (ESE)-dependent splicing activation by bridging together sequence-specific (SR family proteins, SFRS4, SFRS5 and TRA2B/SFRS10) and basal snRNP (SNRP70 and SNRPA1) factors of the spliceosome. Stimulates mRNA 3'-end cleavage independently of the formation of an exon junction complex. Binds both pre-mRNA and spliced mRNA 20-25 nt upstream of exon-exon junctions. Binds RNA and DNA with low sequence specificity and has similar preference for either double- or single-stranded nucleic acid substrates. The chain is Serine/arginine repetitive matrix protein 1 (SRRM1) from Pongo abelii (Sumatran orangutan).